Here is a 287-residue protein sequence, read N- to C-terminus: Small ribosomal subunit protein uS10m (287 aa).

The N-terminal 33 residues, 1 to 33 (MSLFSPHRILLRTGSAFQLATATRALLSTSSQL), are a transit peptide targeting the mitochondrion. Residues 33–43 (LRNTKNAQSGL) are compositionally biased toward polar residues. The interval 33–84 (LRNTKNAQSGLAEQARAEEPVASSPSQTTRPEQKSLEEETTKQTQTHADSTV) is disordered. Residues 63–73 (PEQKSLEEETT) are compositionally biased toward basic and acidic residues. A compositionally biased stretch (polar residues) spans 74 to 84 (KQTQTHADSTV).

This sequence belongs to the universal ribosomal protein uS10 family. In terms of assembly, part of the mitochondrial small ribosomal subunit.

The protein localises to the mitochondrion. In terms of biological role, involved in mitochondrial genome encoded proteins translation. Involved in the binding of tRNA to the ribosomes. This is Small ribosomal subunit protein uS10m (rsm10) from Emericella nidulans (strain FGSC A4 / ATCC 38163 / CBS 112.46 / NRRL 194 / M139) (Aspergillus nidulans).